Reading from the N-terminus, the 100-residue chain is MAKKSLIYREKKRQKLEKKYHLIRRSSKKEISQIPSLSEKWKIHGKLQSPPRNSAPTRLHRRCFSTGRPRANYRDFGLSGHILREMVQACLLPGATRSSW.

It belongs to the universal ribosomal protein uS14 family. Part of the 30S ribosomal subunit.

Its subcellular location is the plastid. It localises to the chloroplast. In terms of biological role, binds 16S rRNA, required for the assembly of 30S particles. This Lepidium virginicum (Virginia pepperweed) protein is Small ribosomal subunit protein uS14c.